Here is a 487-residue protein sequence, read N- to C-terminus: Argininosuccinate lyase (487 aa).

The protein belongs to the lyase 1 family. Argininosuccinate lyase subfamily.

It localises to the cytoplasm. The catalysed reaction is 2-(N(omega)-L-arginino)succinate = fumarate + L-arginine. Its pathway is amino-acid biosynthesis; L-arginine biosynthesis; L-arginine from L-ornithine and carbamoyl phosphate: step 3/3. The protein is Argininosuccinate lyase of Methanothrix thermoacetophila (strain DSM 6194 / JCM 14653 / NBRC 101360 / PT) (Methanosaeta thermophila).